We begin with the raw amino-acid sequence, 196 residues long: Glycerol-3-phosphate acyltransferase (196 aa).

Transmembrane regions (helical) follow at residues 2 to 22 (GWWL…SYLI), 51 to 71 (VVGG…VFIA), 80 to 100 (LVSL…FMKF), 112 to 132 (IIFC…LVIV), and 137 to 156 (YASL…GYLF).

The protein belongs to the PlsY family. In terms of assembly, probably interacts with PlsX.

The protein localises to the cell inner membrane. The enzyme catalyses an acyl phosphate + sn-glycerol 3-phosphate = a 1-acyl-sn-glycero-3-phosphate + phosphate. It participates in lipid metabolism; phospholipid metabolism. Functionally, catalyzes the transfer of an acyl group from acyl-phosphate (acyl-PO(4)) to glycerol-3-phosphate (G3P) to form lysophosphatidic acid (LPA). This enzyme utilizes acyl-phosphate as fatty acyl donor, but not acyl-CoA or acyl-ACP. In Thermotoga petrophila (strain ATCC BAA-488 / DSM 13995 / JCM 10881 / RKU-1), this protein is Glycerol-3-phosphate acyltransferase.